The sequence spans 507 residues: FSD1-like protein (507 aa).

Residues 70–109 (KQEQVRKSQELQSQLSQCNNALENSEELLEFATRSLDIKE) adopt a coiled-coil conformation. Residues 105-162 (LDIKEPEEFSKAARQIKDRVTMASAFRLSLKPKVSDNMTHLMVDFSQERQMLQTLKFL) enclose the COS domain. Positions 164–268 (VPKAPEIDPV…DPVTLETRAL (105 aa)) constitute a Fibronectin type-III domain. Residues 291-484 (DPTGGKGQES…LSTGMQVPSA (194 aa)) form the B30.2/SPRY domain. The disordered stretch occupies residues 292–345 (PTGGKGQESKIKGKENKGSVHVTSLKKHTSGTPSPKRTSVGSRPPAVRGSRDRF). A compositionally biased stretch (basic and acidic residues) spans 298-309 (QESKIKGKENKG). Residues 321–332 (SGTPSPKRTSVG) are compositionally biased toward polar residues. Phosphoserine is present on residues Ser-498 and Ser-501.

The chain is FSD1-like protein (Fsd1l) from Mus musculus (Mouse).